A 183-amino-acid polypeptide reads, in one-letter code: Capsid protein (183 aa).

The tract at residues 143 to 183 (LPENAVVRRRGRSPRRRTPSPRRRRSQSPRRRRSQSRGSQC) is disordered. Residues 149–177 (VRRRGRSPRRRTPSPRRRRSQSPRRRRSQ) show a composition bias toward basic residues. 3 positions are modified to phosphoserine; by host: Ser155, Ser162, and Ser170. The stretch at 155-161 (SPRRRTP) is one 1; half-length repeat. Positions 155–177 (SPRRRTPSPRRRRSQSPRRRRSQ) are 3 X 8 AA repeats of S-P-R-R-R-[PR]-S-Q. A Bipartite nuclear localization signal motif is present at residues 158 to 175 (RRTPSPRRRRSQSPRRRR). 2 repeat units span residues 162–169 (SPRRRRSQ) and 170–177 (SPRRRRSQ). An RNA binding region spans residues 177-183 (QSRGSQC).

This sequence belongs to the orthohepadnavirus core antigen family. In terms of assembly, homodimerizes, then multimerizes. Interacts with cytosol exposed regions of viral L glycoprotein present in the reticulum-to-Golgi compartment. Interacts with human FLNB. Phosphorylated form interacts with host importin alpha; this interaction depends on the exposure of the NLS, which itself depends upon genome maturation and/or phosphorylation of the capsid protein. Interacts with host NUP153. In terms of processing, phosphorylated by host SRPK1, SRPK2, and maybe protein kinase C or GAPDH. Phosphorylation is critical for pregenomic RNA packaging. Protein kinase C phosphorylation is stimulated by HBx protein and may play a role in transport of the viral genome to the nucleus at the late step during the viral replication cycle.

It is found in the virion. The protein localises to the host cytoplasm. Its function is as follows. Self assembles to form an icosahedral capsid. Most capsids appear to be large particles with an icosahedral symmetry of T=4 and consist of 240 copies of capsid protein, though a fraction forms smaller T=3 particles consisting of 180 capsid proteins. Entering capsids are transported along microtubules to the nucleus. Phosphorylation of the capsid is thought to induce exposure of nuclear localization signal in the C-terminal portion of the capsid protein that allows binding to the nuclear pore complex via the importin (karyopherin-) alpha and beta. Capsids are imported in intact form through the nuclear pore into the nuclear basket, where it probably binds NUP153. Only capsids that contain the mature viral genome can release the viral DNA and capsid protein into the nucleoplasm. Immature capsids get stuck in the basket. Capsids encapsulate the pre-genomic RNA and the P protein. Pre-genomic RNA is reverse-transcribed into DNA while the capsid is still in the cytoplasm. The capsid can then either be directed to the nucleus, providing more genomes for transcription, or bud through the endoplasmic reticulum to provide new virions. This is Capsid protein from Homo sapiens (Human).